The chain runs to 319 residues: Ninja-family protein AFP4 (319 aa).

The span at Asp39–Asp54 shows a compositional bias: basic and acidic residues. Disordered stretches follow at residues Asp39–Val63, Phe99–Arg120, and Val205–Asn228.

It belongs to the Ninja family. In terms of assembly, interacts with ABI5/DPBF1, AREB3/DPBF3, EEL/DPBF4, ABF1 and ABF3/DPBF5. As to expression, predominantly expressed in roots and seedlings.

The protein resides in the nucleus. In terms of biological role, acts as a negative regulator of abscisic acid (ABA) and salinity responses. This chain is Ninja-family protein AFP4 (AFP4), found in Arabidopsis thaliana (Mouse-ear cress).